The chain runs to 1151 residues: Calcium-activated potassium channel subunit alpha-1 (1151 aa).

A disordered region spans residues 1-36; the sequence is MSSNIHANHLSLDASSSSSSSSSSSSSSSSSSSVHE. The Extracellular segment spans residues 1–59; sequence MSSNIHANHLSLDASSSSSSSSSSSSSSSSSSSVHEPKMDALIIPVTMEVPCDSRGQRM. Residues 15 to 33 show a composition bias toward low complexity; the sequence is SSSSSSSSSSSSSSSSSSS. A helical membrane pass occupies residues 60-80; it reads WWAFLASSMVTFFGGLFIILL. Topologically, residues 81 to 151 are cytoplasmic; it reads WRTLKYLWTV…MISAQTLTGR (71 aa). 3 S-palmitoyl cysteine lipidation sites follow: Cys91, Cys92, and Cys94. A helical transmembrane segment spans residues 152–172; the sequence is VLVVLVFALSIGALVIYFIDS. At 173 to 187 the chain is on the extracellular side; it reads SNPIESCQNFYKDFT. The chain crosses the membrane as a helical span at residues 188–208; that stretch reads LQIDMAFNVFFLLYFGLRFIA. The Cytoplasmic portion of the chain corresponds to 209 to 212; that stretch reads ANDK. A helical membrane pass occupies residues 213–233; it reads LWFWLEVNSVVDFFTVPPVFV. The Extracellular segment spans residues 234 to 237; the sequence is SVYL. Residues 238–258 form a helical; Voltage-sensor membrane-spanning segment; the sequence is NRSWLGLRFLRALRLIQFSEI. Over 259-273 the chain is Cytoplasmic; the sequence is LQFLNILKTSNSIKL. A helical transmembrane segment spans residues 274-294; sequence VNLLSIFISTWLTAAGFIHLV. The Extracellular portion of the chain corresponds to 295–308; it reads ENSGDPWENFQNNQ. The pore-forming intramembrane region spans 309 to 331; sequence ALTYWECVYLLMVTMSTVGYGDV. Residues 325-328 carry the Selectivity for potassium motif; sequence TVGY. The Extracellular portion of the chain corresponds to 332 to 340; the sequence is YAKTTLGRL. A helical transmembrane segment spans residues 341 to 361; the sequence is FMVFFILGGLAMFASYVPEII. Residues 362-1151 are Cytoplasmic-facing; that stretch reads ELIGNRKKYG…KQKYVQEERL (790 aa). One can recognise an RCK N-terminal 1 domain in the interval 380–522; sequence RKHIVVCGHI…WNWKEGDDAI (143 aa). 3 residues coordinate Mg(2+): Glu412, Gln435, and Glu437. Residues 529–549 are segment S7; it reads LGFIAQSCLAQGLSTMLANLF. Residues 586-606 form a segment S8 region; that stretch reads LSFPTVCELCFVKLKLLMIAI. Residues 650-654 form a heme-binding motif region; it reads CKACH. Positions 674–702 are disordered; the sequence is EQPSTLSPKKKQRNGGMRNSPNSSPKLMR. Thr678 is modified (phosphothreonine). A phosphoserine mark is found at Ser680, Ser693, and Ser697. The tract at residues 752–772 is segment S9; the sequence is VLSGHVVVCIFGDVSSALIGL. Residues 754–898 form the RCK N-terminal 2 domain; that stretch reads SGHVVVCIFG…MDRSSPDNSP (145 aa). Residue Thr885 is modified to Phosphothreonine. 2 positions are modified to phosphoserine: Ser893 and Ser897. The Calcium bowl motif lies at 918–940; that stretch reads TELVNDTNVQFLDQDDDDDPDTE. The Ca(2+) site is built by Gln927, Asp930, Asp933, and Asp935. Positions 947–967 are segment S10; it reads FACGTAFAVSVLDSLMSATYF. The segment covering 1101-1126 has biased composition (low complexity); the sequence is RASLSHSSHSSQSSSKKSSSVHSIPS. The interval 1101–1151 is disordered; the sequence is RASLSHSSHSSQSSSKKSSSVHSIPSTANRQNRPKSRESRDKQKYVQEERL. Residues 1135–1151 show a composition bias toward basic and acidic residues; sequence KSRESRDKQKYVQEERL. Ser1136 and Ser1139 each carry phosphoserine.

Belongs to the potassium channel family. Calcium-activated (TC 1.A.1.3) subfamily. KCa1.1/KCNMA1 sub-subfamily. As to quaternary structure, homotetramer; which constitutes the calcium-activated potassium channel. Interacts with beta subunits KCNMB1, KCNMB2, KCNMB3 and KCNMB4. Interacts with gamma subunits LRRC26, LRRC38, LRRC52 and LRRC55. Beta and gamma subunits are accessory, and modulate its activity. Interacts with RAB11B. In terms of processing, phosphorylated. Phosphorylation by kinases such as PKA and/or PKG. In smooth muscles, phosphorylation affects its activity. Post-translationally, palmitoylation by ZDHHC22 and ZDHHC23 within the intracellular linker between the S0 and S1 transmembrane domains regulates localization to the plasma membrane. Depalmitoylated by LYPLA1 and LYPLAL1, leading to retard exit from the trans-Golgi network.

The protein resides in the cell membrane. The enzyme catalyses K(+)(in) = K(+)(out). With respect to regulation, ethanol and carbon monoxide-bound heme increase channel activation. Heme inhibits channel activation. Functionally, potassium channel activated by both membrane depolarization or increase in cytosolic Ca(2+) that mediates export of K(+). It is also activated by the concentration of cytosolic Mg(2+). Its activation dampens the excitatory events that elevate the cytosolic Ca(2+) concentration and/or depolarize the cell membrane. It therefore contributes to repolarization of the membrane potential. Plays a key role in controlling excitability in a number of systems, such as regulation of the contraction of smooth muscle, the tuning of hair cells in the cochlea, regulation of transmitter release, and innate immunity. In smooth muscles, its activation by high level of Ca(2+), caused by ryanodine receptors in the sarcoplasmic reticulum, regulates the membrane potential. In cochlea cells, its number and kinetic properties partly determine the characteristic frequency of each hair cell and thereby helps to establish a tonotopic map. Kinetics of KCNMA1 channels are determined by alternative splicing, phosphorylation status and its combination with modulating beta subunits. Highly sensitive to both iberiotoxin (IbTx) and charybdotoxin (CTX). In Macaca mulatta (Rhesus macaque), this protein is Calcium-activated potassium channel subunit alpha-1 (KCNMA1).